Consider the following 392-residue polypeptide: Imidazolonepropionase (392 aa).

The Fe(3+) site is built by H69 and H71. H69 and H71 together coordinate Zn(2+). Residues R78, Y136, and H163 each coordinate 4-imidazolone-5-propanoate. Y136 provides a ligand contact to N-formimidoyl-L-glutamate. H226 provides a ligand contact to Fe(3+). H226 is a binding site for Zn(2+). Residue Q229 coordinates 4-imidazolone-5-propanoate. D302 serves as a coordination point for Fe(3+). Residue D302 participates in Zn(2+) binding. 2 residues coordinate N-formimidoyl-L-glutamate: N304 and G306. S307 contacts 4-imidazolone-5-propanoate.

Belongs to the metallo-dependent hydrolases superfamily. HutI family. Zn(2+) serves as cofactor. It depends on Fe(3+) as a cofactor.

The protein resides in the cytoplasm. It carries out the reaction 4-imidazolone-5-propanoate + H2O = N-formimidoyl-L-glutamate. It participates in amino-acid degradation; L-histidine degradation into L-glutamate; N-formimidoyl-L-glutamate from L-histidine: step 3/3. In terms of biological role, catalyzes the hydrolytic cleavage of the carbon-nitrogen bond in imidazolone-5-propanoate to yield N-formimidoyl-L-glutamate. It is the third step in the universal histidine degradation pathway. This is Imidazolonepropionase from Salinispora arenicola (strain CNS-205).